A 405-amino-acid polypeptide reads, in one-letter code: Terminal uridylyltransferase cid1 (405 aa).

Residue Ser90 participates in UTP binding. Residues Asp101 and Asp103 each contribute to the Mg(2+) site. Positions 168, 171, 172, 193, 197, 211, 212, and 336 each coordinate UTP. The PAP-associated domain occupies 267–336 (SLGSLLHGFF…AIEDPFEISH (70 aa)). Position 340 (Arg340) interacts with ATP. Residues 377-405 (APIPPRRQKKTDEQSNKKLLNETDGDNSE) are disordered. A compositionally biased stretch (basic and acidic residues) spans 386–397 (KTDEQSNKKLLN).

The protein belongs to the DNA polymerase type-B-like family. It depends on Mg(2+) as a cofactor. Requires Mn(2+) as cofactor.

The protein resides in the cytoplasm. The enzyme catalyses RNA(n) + UTP = RNA(n)-3'-uridine ribonucleotide + diphosphate. It catalyses the reaction RNA(n) + ATP = RNA(n)-3'-adenine ribonucleotide + diphosphate. Its function is as follows. Cytoplasmic uridylyltransferase that mediates the terminal uridylation of mRNAs with short poly(A) tails such as such as act1, hcn1 and urg1 mRNAs, hence facilitating global mRNA decay. Uridylates the 3' ends of actin mRNAs upon S-phase arrest. Also has a weak poly(A) polymerase (PAP) activity. Residue His-336 is responsible for the specificity for UTP. Involved in cell cycle arrest where in association with crb2/rhp9 and chk1 it inhibits unscheduled mitosis. This chain is Terminal uridylyltransferase cid1, found in Schizosaccharomyces pombe (strain 972 / ATCC 24843) (Fission yeast).